The following is a 505-amino-acid chain: Surface lipoprotein assembly modifier 2 (505 aa).

The first 19 residues, 1 to 19, serve as a signal peptide directing secretion; that stretch reads MLYFRYGFLVVWCAAGVSA. An N-terminal domain region spans residues 23-188; that stretch reads ADAPAILDDK…RFRKKTEGLT (166 aa). Residues 189–505 are C-terminal probable beta barrel; that stretch reads GWRFSGGISP…EVFVSADWRF (317 aa). A run of 14 beta stranded transmembrane segments spans residues 190–200, 232–243, 248–258, 273–283, 287–297, 326–335, 340–350, 368–377, 381–391, 411–420, 427–437, 456–465, 472–482, and 495–505; these read WRFSGGISPAV, LNYEIEAEKLTP, HYLLFRSNIGG, FGRAYLGWQYK, QTAGILPFYQV, VGVQLSHTYR, WQFSVALEHYR, GFYVSSAKRL, ATVFGGWQFVR, NGVYAGWAQE, LNSRVSASYAR, WNVSLALSHD, IVPALNYRFGR, and SEVFVSADWRF.

This sequence belongs to the Slam family.

The protein localises to the cell outer membrane. Functionally, required for correct export to the cell surface of cell outer membrane lipoprotein HpuA heterologously in E.coli (hpuA does not exist in N.meningitidis strain MC58). The sequence is that of Surface lipoprotein assembly modifier 2 from Neisseria meningitidis serogroup B (strain ATCC BAA-335 / MC58).